A 1251-amino-acid polypeptide reads, in one-letter code: Phospholipid-transporting ATPase IC (1251 aa).

The tract at residues 1-54 (MSTERDSETTFDEDSQPNDEVVPYSDDETEDELDDQGSAVEPEQNRVNREAEEN) is disordered. Residues 1 to 108 (MSTERDSETT…TYKYNAFTFI (108 aa)) lie on the Cytoplasmic side of the membrane. Residues 25–35 (SDDETEDELDD) show a composition bias toward acidic residues. The segment covering 43-54 (EQNRVNREAEEN) has biased composition (basic and acidic residues). The helical transmembrane segment at 109–130 (PMNLFEQFKRAANLYFLALLIL) threads the bilayer. At 131–136 (QAVPQI) the chain is on the exoplasmic loop side. The chain crosses the membrane as a helical span at residues 137–156 (STLAWYTTLVPLLVVLGVTA). At 157 to 340 (IKDLVDDVAR…TKIDYLMNYM (184 aa)) the chain is on the cytoplasmic side. The helical transmembrane segment at 341 to 362 (VYTIFVVLILLSAGLAIGHAYW) threads the bilayer. Residues 363 to 389 (EAQVGNSSWYLYDGEDDTPSYRGFLIF) lie on the Exoplasmic loop side of the membrane. A helical transmembrane segment spans residues 390-411 (WGYIIVLNTMVPISLYVSVEVI). Residues 412–949 (RLGQSHFINW…GRWSYIRMCK (538 aa)) lie on the Cytoplasmic side of the membrane. The 4-aspartylphosphate intermediate role is filled by Asp454. ATP is bound by residues Asp454, Lys455, Thr456, Glu555, Phe596, Lys619, Arg652, Thr732, Gly733, Asp734, Arg867, and Lys873. Mg(2+) is bound at residue Asp454. Thr456 is a Mg(2+) binding site. Asp893 serves as a coordination point for Mg(2+). Asn896 and Asp897 together coordinate ATP. Mg(2+) is bound at residue Asp897. Residues 950–970 (FLRYFFYKNFAFTLVHFWYSF) traverse the membrane as a helical segment. The Exoplasmic loop segment spans residues 971 to 982 (FNGYSAQTAYED). The helical transmembrane segment at 983-1002 (WFITLYNVLYTSLPVLLMGL) threads the bilayer. Topologically, residues 1003–1032 (LDQDVSDKLSLRFPGLYIVGQRDLLFNYKR) are cytoplasmic. The helical transmembrane segment at 1033-1054 (FFVSLLHGVLTSMILFFIPLGA) threads the bilayer. Residues 1055–1068 (YLQTVGQDGEAPSD) lie on the Exoplasmic loop side of the membrane. Residues 1069 to 1091 (YQSFAVTIASALVITVNFQIGLD) traverse the membrane as a helical segment. Over 1092–1097 (TSYWTF) the chain is Cytoplasmic. A helical transmembrane segment spans residues 1098–1118 (VNAFSIFGSIALYFGIMFDFH). The Exoplasmic loop portion of the chain corresponds to 1119-1138 (SAGIHVLFPSAFQFTGTASN). The helical transmembrane segment at 1139 to 1163 (ALRQPYIWLTIILAVAVCLLPVVAI) threads the bilayer. Topologically, residues 1164 to 1251 (RFLSMTIWPS…TAEYRRTGDS (88 aa)) are cytoplasmic. Ser1223 is subject to Phosphoserine.

It belongs to the cation transport ATPase (P-type) (TC 3.A.3) family. Type IV subfamily. As to quaternary structure, component of a P4-ATPase flippase complex which consists of a catalytic alpha subunit ATP8B1 and an accessory beta subunit TMEM30A. The flippase ATP8B1:TMEM30A complex can form an intermediate phosphoenzyme in vitro. Also interacts with beta subunit TMEM30B. Requires Mg(2+) as cofactor. Found in most tissues except brain and skeletal muscle. Most abundant in pancreas and small intestine.

Its subcellular location is the cell membrane. The protein localises to the apical cell membrane. It localises to the cell projection. It is found in the stereocilium. The protein resides in the endoplasmic reticulum. Its subcellular location is the golgi apparatus. The enzyme catalyses ATP + H2O + phospholipidSide 1 = ADP + phosphate + phospholipidSide 2.. It catalyses the reaction a 1,2-diacyl-sn-glycero-3-phosphocholine(out) + ATP + H2O = a 1,2-diacyl-sn-glycero-3-phosphocholine(in) + ADP + phosphate + H(+). It carries out the reaction a 1,2-diacyl-sn-glycero-3-phospho-L-serine(out) + ATP + H2O = a 1,2-diacyl-sn-glycero-3-phospho-L-serine(in) + ADP + phosphate + H(+). In terms of biological role, catalytic component of a P4-ATPase flippase complex which catalyzes the hydrolysis of ATP coupled to the transport of phospholipids, in particular phosphatidylcholines (PC), from the outer to the inner leaflet of the plasma membrane. May participate in the establishment of the canalicular membrane integrity by ensuring asymmetric distribution of phospholipids in the canicular membrane. Thus may have a role in the regulation of bile acids transport into the canaliculus, uptake of bile acids from intestinal contents into intestinal mucosa or both and protect hepatocytes from bile salts. Involved in the microvillus formation in polarized epithelial cells; the function seems to be independent from its flippase activity. Participates in correct apical membrane localization of CDC42, CFTR and SLC10A2. Enables CDC42 clustering at the apical membrane during enterocyte polarization through the interaction between CDC42 polybasic region and negatively charged membrane lipids provided by ATP8B1. Together with TMEM30A is involved in uptake of the synthetic drug alkylphospholipid perifosine. Required for the preservation of cochlear hair cells in the inner ear. May act as cardiolipin transporter during inflammatory injury. This Homo sapiens (Human) protein is Phospholipid-transporting ATPase IC.